Reading from the N-terminus, the 267-residue chain is MYADRDLPGAGGLAVRVIPCLDVDDGRVVKGVNFENLRDAGDPVELAAVYDAEGADELTFLDVTASSSGRATMLEVVRRTAEQVFIPLTVGGGVRTVADVDSLLRAGADKVAVNTAAIACLDLLADMARQFGSQCIVLSVDARTVPVGSAPTPSGWEVTTHGGRRGTGMDAVQWAARGADLGVGEILLNSMDADGTKAGFDLALLRAVRAAVTVPVIASGGAGAVEHFAPAVAAGADAVLAASVFHFRELTIGQVKAALAAEGITVR.

Active-site residues include aspartate 22 and aspartate 141.

This sequence belongs to the HisA/HisF family. In terms of assembly, heterodimer of HisH and HisF.

It localises to the cytoplasm. It catalyses the reaction 5-[(5-phospho-1-deoxy-D-ribulos-1-ylimino)methylamino]-1-(5-phospho-beta-D-ribosyl)imidazole-4-carboxamide + L-glutamine = D-erythro-1-(imidazol-4-yl)glycerol 3-phosphate + 5-amino-1-(5-phospho-beta-D-ribosyl)imidazole-4-carboxamide + L-glutamate + H(+). The protein operates within amino-acid biosynthesis; L-histidine biosynthesis; L-histidine from 5-phospho-alpha-D-ribose 1-diphosphate: step 5/9. Its function is as follows. IGPS catalyzes the conversion of PRFAR and glutamine to IGP, AICAR and glutamate. The HisF subunit catalyzes the cyclization activity that produces IGP and AICAR from PRFAR using the ammonia provided by the HisH subunit. The sequence is that of Imidazole glycerol phosphate synthase subunit HisF from Mycobacterium bovis (strain ATCC BAA-935 / AF2122/97).